Consider the following 493-residue polypeptide: Glutamyl-tRNA(Gln) amidotransferase subunit A (493 aa).

Catalysis depends on charge relay system residues K79 and S159. Catalysis depends on S183, which acts as the Acyl-ester intermediate.

This sequence belongs to the amidase family. GatA subfamily. As to quaternary structure, heterotrimer of A, B and C subunits.

The enzyme catalyses L-glutamyl-tRNA(Gln) + L-glutamine + ATP + H2O = L-glutaminyl-tRNA(Gln) + L-glutamate + ADP + phosphate + H(+). Allows the formation of correctly charged Gln-tRNA(Gln) through the transamidation of misacylated Glu-tRNA(Gln) in organisms which lack glutaminyl-tRNA synthetase. The reaction takes place in the presence of glutamine and ATP through an activated gamma-phospho-Glu-tRNA(Gln). The polypeptide is Glutamyl-tRNA(Gln) amidotransferase subunit A (Chelativorans sp. (strain BNC1)).